Reading from the N-terminus, the 154-residue chain is Endoribonuclease YbeY (154 aa).

Residues His-113, His-117, and His-123 each contribute to the Zn(2+) site.

Belongs to the endoribonuclease YbeY family. Requires Zn(2+) as cofactor.

Its subcellular location is the cytoplasm. In terms of biological role, single strand-specific metallo-endoribonuclease involved in late-stage 70S ribosome quality control and in maturation of the 3' terminus of the 16S rRNA. The protein is Endoribonuclease YbeY of Ehrlichia chaffeensis (strain ATCC CRL-10679 / Arkansas).